A 342-amino-acid chain; its full sequence is Phenylalanine--tRNA ligase alpha subunit (342 aa).

Residue Glu-257 coordinates Mg(2+).

It belongs to the class-II aminoacyl-tRNA synthetase family. Phe-tRNA synthetase alpha subunit type 1 subfamily. Tetramer of two alpha and two beta subunits. Mg(2+) is required as a cofactor.

It is found in the cytoplasm. It catalyses the reaction tRNA(Phe) + L-phenylalanine + ATP = L-phenylalanyl-tRNA(Phe) + AMP + diphosphate + H(+). The polypeptide is Phenylalanine--tRNA ligase alpha subunit (pheS) (Chlamydia trachomatis serovar D (strain ATCC VR-885 / DSM 19411 / UW-3/Cx)).